We begin with the raw amino-acid sequence, 241 residues long: DNA repair protein RecO (241 aa).

It belongs to the RecO family.

Its function is as follows. Involved in DNA repair and RecF pathway recombination. The protein is DNA repair protein RecO of Phocaeicola vulgatus (strain ATCC 8482 / DSM 1447 / JCM 5826 / CCUG 4940 / NBRC 14291 / NCTC 11154) (Bacteroides vulgatus).